Consider the following 1295-residue polypeptide: Nonribosomal peptide synthetase resC (1295 aa).

The disordered stretch occupies residues M1–D24. Residues K221 to L624 are adenylation. In terms of domain architecture, Carrier spans E759–V836. S796 is subject to O-(pantetheine 4'-phosphoryl)serine. Residues E873–L1284 are condensation.

It belongs to the NRP synthetase family. Pantetheine 4'-phosphate serves as cofactor.

It catalyses the reaction restrictinol + glycine + H(+) = restricticin + H2O. It participates in antifungal biosynthesis. In terms of biological role, nonribosomal peptide synthetase; part of the gene cluster that mediates the biosynthesis of the tetrahydropyranyl antifungal agent restricticin that acts as an inhibitor of CYP51 and blocks the ergosterol biosynthesis. Within the pathway, resC catalyzes the C3 esterification of restrictinol with glycine to yield restricticin. ResC represents an example of the emerging class of single-module NRPS-like enzymes that perform esterification reactions. The highly reducing polyketide synthase resH, the short chain dehydrogenase resG, the cyclase resF, the FAD-dependent monooxygenase resA and the enoylreductase resD are required to generate the first stable intermediate desmethylrestrictinol. ResH with resD biosynthesize the first polyketide chain intermediate that is reduced by resG, followed by epoxidation by resA before 6-endo cyclization via epoxide opening by resF leads to desmethylrestrictinol. The methyltransferase resE then catalyzes the C4 O-methylation of desmethylrestrictinol to produce restrictinol, and the nonribosomal peptide synthetase resC catalyzes the C3 esterification of restrictinol with glycine that leads to restricticin. The chain is Nonribosomal peptide synthetase resC from Aspergillus sclerotiorum.